The chain runs to 265 residues: MSRRSATSSGHPKVCACPSGLDPYRLPNHVAVIMDGNGRWAKARGLPRMVGHRAGVEALKRTLRLCSDWGIGALTAYAFSTENWSRPGDEVNFLMTLFERVLQRELESLEREKVRIRFLGDLEGLPSGLQELISEATELTVRNNGIHFNVCTNYGGRRELVLAAQKLAQRAARGDLDPTLIDENSFEAELLTAGEVDPDLLIRTSGERRISNFLLWQLAYAEIHVTDVCWPDFDEVALTKALFDYQSRCRRFGGLDPIAANHLGS.

Asp-35 is a catalytic residue. Residue Asp-35 participates in Mg(2+) binding. Residues 36-39, Trp-40, Arg-48, His-52, and 80-82 contribute to the substrate site; these read GNGR and STE. The active-site Proton acceptor is Asn-83. Substrate contacts are provided by residues Trp-84, Arg-86, Arg-203, and 209–211; that span reads RIS. Glu-222 is a binding site for Mg(2+).

It belongs to the UPP synthase family. As to quaternary structure, homodimer. Requires Mg(2+) as cofactor.

Functionally, catalyzes the condensation of isopentenyl diphosphate (IPP) with allylic pyrophosphates generating different type of terpenoids. In Prochlorococcus marinus (strain MIT 9313), this protein is Isoprenyl transferase.